We begin with the raw amino-acid sequence, 361 residues long: Pyruvate dehydrogenase E1 component subunit beta, mitochondrial (361 aa).

The transit peptide at 1–27 directs the protein to the mitochondrion; sequence MAVNGCMRLLRNGLTSACALEQSVRRL. E90 provides a ligand contact to thiamine diphosphate. Positions 143, 191, 192, 194, and 196 each coordinate K(+).

As to quaternary structure, heterotetramer of two PDHA1 and two PDHB subunits. The heterotetramer interacts with DLAT, and is part of the multimeric pyruvate dehydrogenase complex that contains multiple copies of pyruvate dehydrogenase (E1), dihydrolipoamide acetyltransferase (DLAT, E2) and lipoamide dehydrogenase (DLD, E3). It depends on thiamine diphosphate as a cofactor.

The protein resides in the mitochondrion matrix. It catalyses the reaction N(6)-[(R)-lipoyl]-L-lysyl-[protein] + pyruvate + H(+) = N(6)-[(R)-S(8)-acetyldihydrolipoyl]-L-lysyl-[protein] + CO2. Functionally, the pyruvate dehydrogenase complex catalyzes the overall conversion of pyruvate to acetyl-CoA and CO(2), and thereby links the glycolytic pathway to the tricarboxylic cycle. This chain is Pyruvate dehydrogenase E1 component subunit beta, mitochondrial, found in Ascaris suum (Pig roundworm).